A 186-amino-acid chain; its full sequence is Casparian strip membrane protein 3 (186 aa).

Residues 1-26 (MTKSTYVELGEEKTSNQKGNMKRGVS) are Cytoplasmic-facing. Residues 27 to 47 (ILDFILRLIAIVATLASAIAM) traverse the membrane as a helical segment. The Extracellular portion of the chain corresponds to 48-74 (GTTDESLPFFTQFVRFRANYDDLPTLR). The chain crosses the membrane as a helical span at residues 75-95 (FFVVASAIVSGYLILSLPLSI). At 96-107 (LHIIRSSAGMTR) the chain is on the cytoplasmic side. The chain crosses the membrane as a helical span at residues 108-128 (VIFIILDTVMLGLLTAGSSAA). The Extracellular segment spans residues 129 to 161 (ASIVYLAHKGNRKANWFAFCQQYNSFCERISGS). The helical transmembrane segment at 162-182 (LIGSFIAIPLFIMLILLSALV) threads the bilayer. Topologically, residues 183-186 (LSRR) are cytoplasmic.

It belongs to the Casparian strip membrane proteins (CASP) family. Homodimer and heterodimers.

It localises to the cell membrane. In terms of biological role, regulates membrane-cell wall junctions and localized cell wall deposition. Required for establishment of the Casparian strip membrane domain (CSD) and the subsequent formation of Casparian strips, a cell wall modification of the root endodermis that determines an apoplastic barrier between the intraorganismal apoplasm and the extraorganismal apoplasm and prevents lateral diffusion. This chain is Casparian strip membrane protein 3, found in Medicago truncatula (Barrel medic).